Reading from the N-terminus, the 174-residue chain is Small ribosomal subunit protein uS5 (174 aa).

The S5 DRBM domain occupies 19 to 82 (LREKMVAINR…DEARRKLKKI (64 aa)).

This sequence belongs to the universal ribosomal protein uS5 family. Part of the 30S ribosomal subunit. Contacts proteins S4 and S8.

With S4 and S12 plays an important role in translational accuracy. In terms of biological role, located at the back of the 30S subunit body where it stabilizes the conformation of the head with respect to the body. This is Small ribosomal subunit protein uS5 from Aromatoleum aromaticum (strain DSM 19018 / LMG 30748 / EbN1) (Azoarcus sp. (strain EbN1)).